The following is a 326-amino-acid chain: Eukaryotic translation initiation factor 2 subunit 1 (326 aa).

Residues 24–95 (DDLIMVKVNR…QKGYIDLSKR (72 aa)) enclose the S1 motif domain. Serine 59 bears the Phosphoserine; by eIK1, eIK2 and PK4 mark. The disordered stretch occupies residues 291–326 (LDKHDGLSSDDEYSSDGDEDDSSNDDDNSSDEDDDD). The span at 298 to 326 (SSDDEYSSDGDEDDSSNDDDNSSDEDDDD) shows a compositional bias: acidic residues.

This sequence belongs to the eIF-2-alpha family. Phosphorylates at Ser-59 in mature trophozoites, schizonts and gametocytes but not in rings and young trophozoites. Phosphorylates at Ser-59 by eIK2 in salivary gland sporozoites but not in midgut and hemocoel sporozoites. Dephosphorylated at Ser-59 by UIS2. Phosphorylation of eIF2alpha subunit of the pre-initiation complex eIF2 inhibits recycling of inactive eIF2-GDP to active eIF2-GTP by limiting the activity of the guanine nucleotide exchange factor eIF2B and thus, inhibits protein translation.

The protein resides in the cytoplasm. The protein localises to the stress granule. Functions in the early steps of protein synthesis by forming a ternary complex with GTP and initiator tRNA. May regulate protein translation in response to amino acid starvation. May regulate protein at various stages of parasite development. In Plasmodium berghei (strain Anka), this protein is Eukaryotic translation initiation factor 2 subunit 1.